The primary structure comprises 142 residues: Large ribosomal subunit protein cL37 alpha (142 aa).

Residues 1 to 62 (MALLSPLLSL…AQKRGTVVAM (62 aa)) constitute a chloroplast transit peptide. The disordered stretch occupies residues 123 to 142 (RKLRKRGAWPPSKMKKLKNV).

Belongs to the chloroplast-specific ribosomal protein cL37 family. Component of the chloroplast large ribosomal subunit (LSU). Mature 70S chloroplast ribosomes of higher plants consist of a small (30S) and a large (50S) subunit. The 30S small subunit contains 1 molecule of ribosomal RNA (16S rRNA) and 24 different proteins. The 50S large subunit contains 3 rRNA molecules (23S, 5S and 4.5S rRNA) and 33 different proteins.

The protein localises to the plastid. Its subcellular location is the chloroplast. Component of the chloroplast ribosome (chloro-ribosome), a dedicated translation machinery responsible for the synthesis of chloroplast genome-encoded proteins, including proteins of the transcription and translation machinery and components of the photosynthetic apparatus. The polypeptide is Large ribosomal subunit protein cL37 alpha (PSRP5) (Spinacia oleracea (Spinach)).